The following is a 323-amino-acid chain: MKTTFLDFEQPIAELEAKIEELRFVQDDSAVDISEEISRLAGKSQQLTKDIYANLTPWQVAQIARHPQRPYTLDYVREIFTDFHELHGDRAFADDLSIVGGLARFNGQACMVIGHQKGRDTKERALRNFGMSKPEGYRKAKRLMELADKFGLPIFTFVDTPGAFPGIDAEERGQSEAIGHNLYVMAGLKVPLIATIIGEGGSGGALAIAVGDVVQMLQFATYAVISPEGCASILWKTAEKAPEAAEALGLTAHRLKALGLIDKIVSEPLGGAHRDAKGMATMLKRSLAESLRQFQGMSVKELQARRHERLMAYGKFKETGAQE.

A CoA carboxyltransferase C-terminal domain is found at 39 to 293; that stretch reads RLAGKSQQLT…KRSLAESLRQ (255 aa).

Belongs to the AccA family. Acetyl-CoA carboxylase is a heterohexamer composed of biotin carboxyl carrier protein (AccB), biotin carboxylase (AccC) and two subunits each of ACCase subunit alpha (AccA) and ACCase subunit beta (AccD).

Its subcellular location is the cytoplasm. It carries out the reaction N(6)-carboxybiotinyl-L-lysyl-[protein] + acetyl-CoA = N(6)-biotinyl-L-lysyl-[protein] + malonyl-CoA. The protein operates within lipid metabolism; malonyl-CoA biosynthesis; malonyl-CoA from acetyl-CoA: step 1/1. Component of the acetyl coenzyme A carboxylase (ACC) complex. First, biotin carboxylase catalyzes the carboxylation of biotin on its carrier protein (BCCP) and then the CO(2) group is transferred by the carboxyltransferase to acetyl-CoA to form malonyl-CoA. The polypeptide is Acetyl-coenzyme A carboxylase carboxyl transferase subunit alpha (Cupriavidus metallidurans (strain ATCC 43123 / DSM 2839 / NBRC 102507 / CH34) (Ralstonia metallidurans)).